Consider the following 179-residue polypeptide: Adenine phosphoribosyltransferase (179 aa).

This sequence belongs to the purine/pyrimidine phosphoribosyltransferase family. Homodimer.

The protein localises to the cytoplasm. It catalyses the reaction AMP + diphosphate = 5-phospho-alpha-D-ribose 1-diphosphate + adenine. The protein operates within purine metabolism; AMP biosynthesis via salvage pathway; AMP from adenine: step 1/1. Catalyzes a salvage reaction resulting in the formation of AMP, that is energically less costly than de novo synthesis. This is Adenine phosphoribosyltransferase from Jannaschia sp. (strain CCS1).